Here is a 180-residue protein sequence, read N- to C-terminus: Large ribosomal subunit protein uL5 (180 aa).

It belongs to the universal ribosomal protein uL5 family. As to quaternary structure, part of the 50S ribosomal subunit; part of the 5S rRNA/L5/L18/L25 subcomplex. Contacts the 5S rRNA and the P site tRNA. Forms a bridge to the 30S subunit in the 70S ribosome.

Functionally, this is one of the proteins that bind and probably mediate the attachment of the 5S RNA into the large ribosomal subunit, where it forms part of the central protuberance. In the 70S ribosome it contacts protein S13 of the 30S subunit (bridge B1b), connecting the 2 subunits; this bridge is implicated in subunit movement. Contacts the P site tRNA; the 5S rRNA and some of its associated proteins might help stabilize positioning of ribosome-bound tRNAs. This chain is Large ribosomal subunit protein uL5, found in Latilactobacillus sakei subsp. sakei (strain 23K) (Lactobacillus sakei subsp. sakei).